We begin with the raw amino-acid sequence, 1385 residues long: L-2-aminoadipate reductase large subunit (1385 aa).

In terms of domain architecture, Carrier spans 843 to 920; the sequence is SSFSPLEQEI…ELAKEISRVR (78 aa). At Ser880 the chain carries O-(pantetheine 4'-phosphoryl)serine.

Belongs to the ATP-dependent AMP-binding enzyme family. As to quaternary structure, heterodimer of an alpha and a beta subunit. Requires pantetheine 4'-phosphate as cofactor.

It carries out the reaction (S)-2-amino-6-oxohexanoate + NADP(+) + H2O = L-2-aminoadipate + NADPH + 2 H(+). The catalysed reaction is (S)-2-amino-6-oxohexanoate + NAD(+) + H2O = L-2-aminoadipate + NADH + 2 H(+). The enzyme catalyses (S)-2-amino-6-oxohexanoate + AMP + diphosphate + NADP(+) = L-2-aminoadipate + ATP + NADPH + H(+). Its pathway is amino-acid biosynthesis; L-lysine biosynthesis via AAA pathway; L-lysine from L-alpha-aminoadipate (fungal route): step 1/3. In terms of biological role, catalyzes the activation of alpha-aminoadipate by ATP-dependent adenylation and the reduction of activated alpha-aminoadipate by NADPH. The activated alpha-aminoadipate is bound to the phosphopantheinyl group of the enzyme itself before it is reduced to (S)-2-amino-6-oxohexanoate. The chain is L-2-aminoadipate reductase large subunit (LYS2) from Eremothecium gossypii (strain ATCC 10895 / CBS 109.51 / FGSC 9923 / NRRL Y-1056) (Yeast).